Consider the following 295-residue polypeptide: Inorganic pyrophosphatase 1 (295 aa).

The active-site Nucleophile is the Asp19. Residues Asp19 and Asp21 each contribute to the Mg(2+) site. The active-site Proton donor is Asp21. 2 residues coordinate substrate: Asp30 and Asp105. Residue Asp190 participates in Mg(2+) binding.

The protein belongs to the HAD-like hydrolase superfamily. As to quaternary structure, tetramer. It depends on Mg(2+) as a cofactor. Fe(2+) is required as a cofactor. Requires Ni(2+) as cofactor. The cofactor is Co(2+). Mn(2+) serves as cofactor.

It carries out the reaction diphosphate + H2O = 2 phosphate + H(+). Catalyzes the specific cleavage of pyrophosphate. This is Inorganic pyrophosphatase 1 (PS2) from Arabidopsis thaliana (Mouse-ear cress).